The chain runs to 370 residues: Peptidyl-prolyl cis-trans isomerase D (370 aa).

Ser-5 is modified (phosphoserine). In terms of domain architecture, PPIase cyclophilin-type spans 19–183; that stretch reads FFDVDIGGER…KLCVIAECGE (165 aa). Residue Lys-171 is modified to N6-acetyllysine. Positions 185-215 are chaperone activity; sequence KEGDDGGIFPKDGSGDSHPDFPEDADIDLKD. Ser-198 carries the phosphoserine modification. The tract at residues 214–370 is interaction with HSP90AB1; sequence KDVDKILLIT…EKAVYAKMFA (157 aa). 3 TPR repeats span residues 223–256, 273–306, and 307–340; these read TEDL…VDSS, LSCV…DPSN, and TKAL…APED.

The protein belongs to the cyclophilin-type PPIase family. PPIase D subfamily. Identified in ESR1 or NR3C1/GCR steroid receptor-chaperone complexes. Found in HSP90 chaperone complexes with kinase clients LCK or EIF2AK1. Two monomers associate with one HSP90 homodimer. Interacts with HSP90AA1. Interacts with HSP90AB1; PPID and FKBP4 compete for binding to HSP90AB1 and the interaction is mutually exclusive with the PPID:HSPA8 interaction. Interacts with HSPA8; PPID and STIP1 but not FKBP4 compete for binding to HSPA8 and the interaction is mutually exclusive with the PPID:HSP90AB1 interaction. Interacts with S100A1 and S100A2; the interactions dissociate the PPID:HSP90AA1 interaction. Interacts with S100A6. Interacts with MYB, ILF2, XRCC6, RACK1 and RPS3. Interacts with cytoplasmic dynein 1 intermediate chain (DYNC1I1 or DYNC1I2). As to expression, widely expressed.

It is found in the cytoplasm. Its subcellular location is the nucleus. The protein resides in the nucleolus. The protein localises to the nucleoplasm. The catalysed reaction is [protein]-peptidylproline (omega=180) = [protein]-peptidylproline (omega=0). With respect to regulation, less sensitive to inhibition by cyclosporin A than is CYP-18. In terms of biological role, PPIase that catalyzes the cis-trans isomerization of proline imidic peptide bonds in oligopeptides and may therefore assist protein folding. Proposed to act as a co-chaperone in HSP90 complexes such as in unligated steroid receptors heterocomplexes. Different co-chaperones seem to compete for association with HSP90 thus establishing distinct HSP90-co-chaperone-receptor complexes with the potential to exert tissue-specific receptor activity control. May have a preference for estrogen receptor complexes and is not found in glucocorticoid receptor complexes. May be involved in cytoplasmic dynein-dependent movement of the receptor from the cytoplasm to the nucleus. May regulate MYB by inhibiting its DNA-binding activity. Involved in regulation of AHR signaling by promoting the formation of the AHR:ARNT dimer; the function is independent of HSP90 but requires the chaperone activity. Involved in regulation of UV radiation-induced apoptosis. Promotes cell viability in anaplastic lymphoma kinase-positive anaplastic large-cell lymphoma (ALK+ ALCL) cell lines. Functionally, (Microbial infection) May be involved in hepatitis C virus (HCV) replication and release. This is Peptidyl-prolyl cis-trans isomerase D from Homo sapiens (Human).